Reading from the N-terminus, the 821-residue chain is Leucine--tRNA ligase (821 aa).

A 'HIGH' region motif is present at residues 44–54; the sequence is PYPSGRIHMGH. A 'KMSKS' region motif is present at residues 589–593; the sequence is KMSKS. Lys-592 serves as a coordination point for ATP.

This sequence belongs to the class-I aminoacyl-tRNA synthetase family.

Its subcellular location is the cytoplasm. It carries out the reaction tRNA(Leu) + L-leucine + ATP = L-leucyl-tRNA(Leu) + AMP + diphosphate. In Campylobacter concisus (strain 13826), this protein is Leucine--tRNA ligase.